Here is a 145-residue protein sequence, read N- to C-terminus: Aspartate 1-decarboxylase (145 aa).

S25 serves as the catalytic Schiff-base intermediate with substrate; via pyruvic acid. S25 is modified (pyruvic acid (Ser)). T57 lines the substrate pocket. The active-site Proton donor is Y58. Residue 73–75 (GAA) participates in substrate binding.

This sequence belongs to the PanD family. Heterooctamer of four alpha and four beta subunits. Pyruvate serves as cofactor. Is synthesized initially as an inactive proenzyme, which is activated by self-cleavage at a specific serine bond to produce a beta-subunit with a hydroxyl group at its C-terminus and an alpha-subunit with a pyruvoyl group at its N-terminus.

Its subcellular location is the cytoplasm. It catalyses the reaction L-aspartate + H(+) = beta-alanine + CO2. The protein operates within cofactor biosynthesis; (R)-pantothenate biosynthesis; beta-alanine from L-aspartate: step 1/1. Its function is as follows. Catalyzes the pyruvoyl-dependent decarboxylation of aspartate to produce beta-alanine. This chain is Aspartate 1-decarboxylase, found in Micrococcus luteus (strain ATCC 4698 / DSM 20030 / JCM 1464 / CCM 169 / CCUG 5858 / IAM 1056 / NBRC 3333 / NCIMB 9278 / NCTC 2665 / VKM Ac-2230) (Micrococcus lysodeikticus).